We begin with the raw amino-acid sequence, 1792 residues long: Eukaryotic translation initiation factor 4G (1792 aa).

The span at 1-12 (MSQRGDRGEGHA) shows a compositional bias: basic and acidic residues. Disordered stretches follow at residues 1 to 285 (MSQR…PRPP), 424 to 446 (DSSGQRGLPSVQQQSQPVSTYGS), 491 to 590 (SPSM…PTPV), 612 to 659 (NSVP…EDLK), 678 to 761 (GVNK…NESH), 874 to 912 (VASEDPLKPESMLKDQSSSAPAASARPVSREKPSVEITR), 960 to 993 (SSSIADHELPDESSEKEVNMGEDEGKKKVELDDW), 999 to 1018 (MSTPKLERSDSSNQTTEANG), 1275 to 1299 (GEREEAEADKTEEEGEIKQTKEERE), 1407 to 1503 (WQQR…HRTT), and 1537 to 1600 (ELSS…KLYS). A compositionally biased stretch (gly residues) spans 21-42 (FGGGHRGGGGVGGAGKGGGGSS). Positions 88-107 (PLRPPAPQNAPAHVPVPAPR) are enriched in pro residues. 2 stretches are compositionally biased toward polar residues: residues 147–156 (RISSTSTSQG) and 179–191 (STMQFPARTSSAP). Composition is skewed to low complexity over residues 216-243 (PQAPKHQQQQQPLQQQKQQPQSQPPLQQ), 263-278 (PSQVKSSVHVSPSVPN), and 432-442 (PSVQQQSQPVS). Positions 491–517 (SPSMNTGPGSNKDNLAGSTTSGHSQVT) are enriched in polar residues. Basic and acidic residues-rich tracts occupy residues 545-564 (DVNKLKPAEDVVSHRQKDNE), 571-587 (KSGENESKASPITEKHP), and 633-643 (DSNKNATKDTR). A compositionally biased stretch (polar residues) spans 644–654 (NLSQEPQSASS). Low complexity predominate over residues 699 to 718 (AADASSIDRSSARSTSESTE). The span at 964–990 (ADHELPDESSEKEVNMGEDEGKKKVEL) shows a compositional bias: basic and acidic residues. The interval 1018-1030 (GRKRYSRDFLLTL) is EIF4E-binding. One can recognise an MIF4G domain in the interval 1183-1406 (QRQLKAILNK…RDSIDLRKNK (224 aa)). Acidic residues predominate over residues 1278 to 1289 (EEAEADKTEEEG). Basic and acidic residues-rich tracts occupy residues 1290 to 1299 (EIKQTKEERE) and 1411 to 1432 (RKVEGPKKIDEVHRDAAQERHA). 2 stretches are compositionally biased toward low complexity: residues 1439 to 1450 (RGSVVGSGPRRG) and 1461 to 1470 (SAAALASPSS). 2 stretches are compositionally biased toward basic and acidic residues: residues 1490-1503 (IRFEERSPLDHRTT) and 1559-1572 (AREEPGSRIPDRSG). Residues 1576–1593 (PNTQFAGPSNRPASQEGR) show a composition bias toward polar residues. Residues 1603–1727 (DLREKSISAI…SLQEVGTLIE (125 aa)) enclose the MI domain.

Belongs to the eukaryotic initiation factor 4G family. As to quaternary structure, EIF4F is a multi-subunit complex, the composition of which varies with external and internal environmental conditions. It is composed of at least EIF4A, EIF4E and EIF4G. In higher plants two isoforms of EIF4F have been identified, named isoform EIF4F and isoform EIF(iso)4F. Isoform EIF4F has subunits p220 and p26, whereas isoform EIF(iso)4F has subunits p82 and p28.

Functionally, component of the protein complex eIF4F, which is involved in the recognition of the mRNA cap, ATP-dependent unwinding of 5'-terminal secondary structure and recruitment of mRNA to the ribosome. The sequence is that of Eukaryotic translation initiation factor 4G from Oryza sativa subsp. japonica (Rice).